A 780-amino-acid polypeptide reads, in one-letter code: Ribosome biogenesis protein BOP1 homolog (780 aa).

The span at 1–11 (MTKKQAIKRKV) shows a compositional bias: basic residues. Positions 1 to 155 (MTKKQAIKRK…DSDTSDEEDI (155 aa)) are disordered. Residues 17 to 26 (TNEQSSASEP) show a composition bias toward polar residues. Composition is skewed to acidic residues over residues 44 to 53 (EDTTDDEGID), 60 to 72 (SSED…DEEG), 83 to 113 (AEGD…DAEE), and 145 to 154 (EDSDTSDEED). WD repeat units lie at residues 441-482 (GHTD…RTIE), 484-522 (NDVV…KLLI), 566-608 (THFK…SQIP), 611-649 (KSKG…LIKK), 652-691 (TNSK…KPYQ), 695-734 (LHRN…DLLQ), and 750-780 (RDEF…RLYT).

Belongs to the WD repeat BOP1/ERB1 family.

Its subcellular location is the nucleus. It is found in the nucleolus. It localises to the nucleoplasm. Its function is as follows. Required for maturation of ribosomal RNAs and formation of the large ribosomal subunit. The chain is Ribosome biogenesis protein BOP1 homolog from Drosophila virilis (Fruit fly).